The primary structure comprises 240 residues: Uridylate kinase (240 aa).

13-16 is a binding site for ATP; it reads KASG. Positions 21-26 are involved in allosteric activation by GTP; that stretch reads GSQGFG. Gly55 contributes to the UMP binding site. Residues Gly56 and Arg60 each coordinate ATP. UMP is bound by residues Asp75 and 136–143; that span reads TGNPFFTT. Residues Thr163, Gln164, Tyr169, and Asp172 each contribute to the ATP site.

It belongs to the UMP kinase family. Homohexamer.

It localises to the cytoplasm. It carries out the reaction UMP + ATP = UDP + ADP. The protein operates within pyrimidine metabolism; CTP biosynthesis via de novo pathway; UDP from UMP (UMPK route): step 1/1. Allosterically activated by GTP. Inhibited by UTP. Catalyzes the reversible phosphorylation of UMP to UDP. The sequence is that of Uridylate kinase from Rhizobium meliloti (strain 1021) (Ensifer meliloti).